The sequence spans 262 residues: tRNA pseudouridine synthase A (262 aa).

Residue D56 is the Nucleophile of the active site. Residue Y114 participates in substrate binding.

It belongs to the tRNA pseudouridine synthase TruA family. In terms of assembly, homodimer.

The enzyme catalyses uridine(38/39/40) in tRNA = pseudouridine(38/39/40) in tRNA. Its function is as follows. Formation of pseudouridine at positions 38, 39 and 40 in the anticodon stem and loop of transfer RNAs. This Lactiplantibacillus plantarum (strain ATCC BAA-793 / NCIMB 8826 / WCFS1) (Lactobacillus plantarum) protein is tRNA pseudouridine synthase A.